A 181-amino-acid chain; its full sequence is Probable calcium-binding protein CML43 (181 aa).

EF-hand domains follow at residues 24–59, 107–142, and 145–180; these read LNAL…LGLD, SPES…LGLP, and GEIE…VVVP. Asp-37, Asn-39, Asp-41, Glu-48, Asp-120, Asp-122, Asp-124, Glu-131, Asp-158, Asn-160, Asp-162, Arg-164, and Glu-169 together coordinate Ca(2+).

Expressed specifically in roots.

Functionally, calcium-binding protein that may mediate calcium-dependent signal during plant defense response. The protein is Probable calcium-binding protein CML43 (CML43) of Arabidopsis thaliana (Mouse-ear cress).